Here is a 66-residue protein sequence, read N- to C-terminus: Alpha-conotoxin-like Tx2 (66 aa).

Positions 1–21 (MGMRMMFTVFLLVVLATTVVS) are cleaved as a signal peptide. Positions 22–49 (FTSGRRTFHGRNAAAKASGLVSLTDRRP) are excised as a propeptide. 2 disulfides stabilise this stretch: C51–C57 and C52–C65. The tract at residues 53-55 (SHP) is ser-Xaa-Pro motif, crucial for potent interaction with nAChR.

Belongs to the conotoxin A superfamily. As to expression, expressed by the venom duct.

It localises to the secreted. Functionally, alpha-conotoxins act on postsynaptic membranes, they bind to the nicotinic acetylcholine receptors (nAChR) and thus inhibit them. This chain is Alpha-conotoxin-like Tx2, found in Conus textile (Cloth-of-gold cone).